We begin with the raw amino-acid sequence, 309 residues long: GTP cyclohydrolase MptA (309 aa).

The protein belongs to the GTP cyclohydrolase IV family. As to quaternary structure, homodimer. It depends on Fe(2+) as a cofactor.

It carries out the reaction GTP + H2O = 7,8-dihydroneopterin 2',3'-cyclic phosphate + formate + diphosphate + H(+). Its pathway is cofactor biosynthesis; 5,6,7,8-tetrahydromethanopterin biosynthesis. In terms of biological role, converts GTP to 7,8-dihydro-D-neopterin 2',3'-cyclic phosphate, the first intermediate in the biosynthesis of coenzyme methanopterin. This Haloarcula marismortui (strain ATCC 43049 / DSM 3752 / JCM 8966 / VKM B-1809) (Halobacterium marismortui) protein is GTP cyclohydrolase MptA.